The sequence spans 259 residues: Insulin-induced gene 1 protein (259 aa).

Over 1–66 (MPRLHDHVWS…ARPGSWHHDL (66 aa)) the chain is Cytoplasmic. Residues 33–57 (PQGPGAPEPEPAPRGQREGTAGFSA) form a disordered region. The chain crosses the membrane as a helical span at residues 67–89 (VQRSLVLFSFGVVLALVLNLLQI). At 90-108 (QRNVTLFPDEVIATIFSSA) the chain is on the extracellular side. Residues 109–126 (WWVPPCCGTAAAVVGLLY) traverse the membrane as a helical segment. The Cytoplasmic portion of the chain corresponds to 127 to 141 (PCIDSHLGEPHKFKR). Glycyl lysine isopeptide (Lys-Gly) (interchain with G-Cter in ubiquitin) cross-links involve residues K138 and K140. A helical membrane pass occupies residues 142–164 (EWASVMRCIAVFVGINHASAKLD). Over 165–167 (FAN) the chain is Extracellular. The helical transmembrane segment at 168-186 (NVQLSLTLAALSLGLWWTF) threads the bilayer. Residues 187–191 (DRSRS) lie on the Cytoplasmic side of the membrane. S189 is modified (phosphoserine). The chain crosses the membrane as a helical span at residues 192-213 (GLGLGITIAFLATLITQFLVYN). Topologically, residues 214–227 (GVYQYTSPDFLYIR) are extracellular. Residues 228–245 (SWLPCIFFSGGVTVGNIG) form a helical membrane-spanning segment. The Cytoplasmic segment spans residues 246–259 (RQLAMGVPEKPHSD). The KxHxx signature appears at 253-259 (PEKPHSD).

This sequence belongs to the INSIG family. As to quaternary structure, interacts with SCAP; interaction is direct and only takes place in the presence of sterols; it prevents interaction between SCAP and the coat protein complex II (COPII). Associates with the SCAP-SREBP complex (composed of SCAP and SREBF1/SREBP1 or SREBF2/SREBP2); association is mediated via its interaction with SCAP and only takes place in the presence of sterols. Interaction with SCAP is mutually exclusive with PAQR3. Interacts with HMGCR (via its SSD); the interaction, accelerated by sterols, leads to the recruitment of HMGCR to AMFR/gp78 for its ubiquitination by the sterol-mediated ERAD pathway. Interacts with AMFR/gp78 (via its membrane domain); the interaction recruits HMCR at the ER membrane for its ubiquitination and degradation by the sterol-mediated ERAD pathway. Interacts with SOAT2/ACAT2; leading to promote recruitment of AMFR/gp78 and subsequent ubiquitination of SOAT2/ACAT2. Interacts with RNF139. Interacts with RNF145. Phosphorylation at Ser-189 by PCK1 reduces binding to oxysterol, disrupting the interaction between INSIG1 and SCAP, thereby promoting nuclear translocation of SREBP proteins (SREBF1/SREBP1 or SREBF2/SREBP2) and subsequent transcription of downstream lipogenesis-related genes. Post-translationally, ubiquitinated by AMFR/gp78 in response to sterol deprivation, leading to its degradation: when the SCAP-SREBP complex becomes dissociated from INSIG1, INSIG1 is then ubiquitinated and degraded in proteasomes. Although ubiquitination is required for rapid INSIG1 degradation, it is not required for release of the SCAP-SREBP complex. Ubiquitinated by RNF139. As to expression, highly expressed in liver and kidney.

The protein localises to the endoplasmic reticulum membrane. Its function is as follows. Oxysterol-binding protein that mediates feedback control of cholesterol synthesis by controlling both endoplasmic reticulum to Golgi transport of SCAP and degradation of HMGCR. Acts as a negative regulator of cholesterol biosynthesis by mediating the retention of the SCAP-SREBP complex in the endoplasmic reticulum, thereby blocking the processing of sterol regulatory element-binding proteins (SREBPs) SREBF1/SREBP1 and SREBF2/SREBP2. Binds oxysterol, including 25-hydroxycholesterol, regulating interaction with SCAP and retention of the SCAP-SREBP complex in the endoplasmic reticulum. In presence of oxysterol, interacts with SCAP, retaining the SCAP-SREBP complex in the endoplasmic reticulum, thereby preventing SCAP from escorting SREBF1/SREBP1 and SREBF2/SREBP2 to the Golgi. Sterol deprivation or phosphorylation by PCK1 reduce oxysterol-binding, disrupting the interaction between INSIG1 and SCAP, thereby promoting Golgi transport of the SCAP-SREBP complex, followed by processing and nuclear translocation of SREBF1/SREBP1 and SREBF2/SREBP2. Also regulates cholesterol synthesis by regulating degradation of HMGCR: initiates the sterol-mediated ubiquitin-mediated endoplasmic reticulum-associated degradation (ERAD) of HMGCR via recruitment of the reductase to the ubiquitin ligases AMFR/gp78 and/or RNF139. Also regulates degradation of SOAT2/ACAT2 when the lipid levels are low: initiates the ubiquitin-mediated degradation of SOAT2/ACAT2 via recruitment of the ubiquitin ligases AMFR/gp78. The polypeptide is Insulin-induced gene 1 protein (Rattus norvegicus (Rat)).